Consider the following 20-residue polypeptide: Ranalexin-1Cb (20 aa).

The cysteines at positions 14 and 20 are disulfide-linked.

In terms of tissue distribution, expressed by the skin glands.

It is found in the secreted. Antibacterial activity against Gram-positive bacterium S.aureus and Gram-negative bacterium E.coli. Has activity against C.albicans. The polypeptide is Ranalexin-1Cb (Lithobates clamitans (Green frog)).